A 373-amino-acid polypeptide reads, in one-letter code: Valienol-1-phosphate guanylyltransferase (373 aa).

Residues G177 and E192 to K193 contribute to the substrate site.

Belongs to the bacterial/plant glucose-1-phosphate adenylyltransferase family. The cofactor is Mg(2+).

The enzyme catalyses valienol 1-phosphate + GTP + H(+) = GDP-valienol + diphosphate. Functionally, involved in the biosynthesis of the antifungal agent validamycin A. Catalyzes the conversion of valienol 1-phosphate to GDP-valienol and less effectively to ADP-valienol or other NDP derivatives. The polypeptide is Valienol-1-phosphate guanylyltransferase (Streptomyces hygroscopicus subsp. limoneus).